Reading from the N-terminus, the 274-residue chain is tRNA uridine(34) hydroxylase (274 aa).

The Rhodanese domain occupies 121–217 (SRSDVYTIDT…YFKSTKNTNN (97 aa)). Cysteine 177 (cysteine persulfide intermediate) is an active-site residue.

This sequence belongs to the TrhO family.

It catalyses the reaction uridine(34) in tRNA + AH2 + O2 = 5-hydroxyuridine(34) in tRNA + A + H2O. In terms of biological role, catalyzes oxygen-dependent 5-hydroxyuridine (ho5U) modification at position 34 in tRNAs. This Ehrlichia canis (strain Jake) protein is tRNA uridine(34) hydroxylase.